A 732-amino-acid polypeptide reads, in one-letter code: Catalase-peroxidase (732 aa).

The interval 1–26 (MADNKKSPETGGITMQIPGKGRTNRD) is disordered. The tryptophyl-tyrosyl-methioninium (Trp-Tyr) (with M-245) cross-link spans 96-219 (WHSAGTYRTF…LAAVQMGLIY (124 aa)). Residue His97 is the Proton acceptor of the active site. A cross-link (tryptophyl-tyrosyl-methioninium (Tyr-Met) (with W-96)) is located at residues 219–245 (YVNPEGPDGNPDPVAAARDIREVFARM). A heme b-binding site is contributed by His260. Positions 344–365 (KPKGEAGAGTVPDPHDPKKRHA) are disordered.

Belongs to the peroxidase family. Peroxidase/catalase subfamily. Homodimer or homotetramer. Requires heme b as cofactor. In terms of processing, formation of the three residue Trp-Tyr-Met cross-link is important for the catalase, but not the peroxidase activity of the enzyme.

The catalysed reaction is H2O2 + AH2 = A + 2 H2O. It carries out the reaction 2 H2O2 = O2 + 2 H2O. Functionally, bifunctional enzyme with both catalase and broad-spectrum peroxidase activity. The sequence is that of Catalase-peroxidase from Methanospirillum hungatei JF-1 (strain ATCC 27890 / DSM 864 / NBRC 100397 / JF-1).